The chain runs to 969 residues: Surface protein P113 (969 aa).

A signal peptide spans 1-22 (MKIPFFILHILLLQFLLCLIRC). Asn-207 is a glycosylation site (N-linked (GlcNAc...) asparagine). Positions 223–328 (IGDESTDSSS…TDTLVNNKEN (106 aa)) are disordered. Positions 229–241 (DSSSMEIQDSTSN) are enriched in polar residues. Residue Asn-268 is glycosylated (N-linked (GlcNAc...) asparagine). The segment covering 300–311 (KNEDNKDLEHGS) has biased composition (basic and acidic residues). Residues 312–325 (SNDVNNNTDTLVNN) are compositionally biased toward low complexity. 4 N-linked (GlcNAc...) asparagine glycosylation sites follow: Asn-317, Asn-360, Asn-661, and Asn-697. A compositionally biased stretch (polar residues) spans 688–705 (SSNFNIFDSNNTDQNNEQ). A disordered region spans residues 688 to 947 (SSNFNIFDSN…NETNKTDNGS (260 aa)). Positions 713–727 (QLLNNNNDDVLSESN) are enriched in low complexity. Over residues 728–749 (NENKEKTSDDATHKETQEKSDQ) the composition is skewed to basic and acidic residues. An N-linked (GlcNAc...) asparagine glycan is attached at Asn-779. Acidic residues predominate over residues 798 to 811 (EGTEELQQNDEDAE). Positions 812-822 (SLTKENSKSEE) are enriched in basic and acidic residues. The segment covering 823 to 841 (QENEDSTDAEAIDKEEVET) has biased composition (acidic residues). Basic and acidic residues predominate over residues 842–854 (EEKGKDEQKKDEQ). A compositionally biased stretch (acidic residues) spans 855–864 (KEQDEEEDGE). Asn-876 is a glycosylation site (N-linked (GlcNAc...) asparagine). Residues 883–896 (EENKNEVKGEEHLQ) show a composition bias toward basic and acidic residues. The span at 897 to 907 (GSEQSIEASES) shows a compositional bias: low complexity. The span at 908-917 (SQKDETKETE) shows a compositional bias: basic and acidic residues. A compositionally biased stretch (acidic residues) spans 918–936 (DKEEYVNANDDESSEEDTT). Polar residues predominate over residues 937-947 (PNETNKTDNGS). N-linked (GlcNAc...) asparagine glycosylation is found at Asn-938, Asn-941, and Asn-945. Asn-945 carries GPI-anchor amidated asparagine lipidation. Positions 946-969 (GSSFFFAMSNALLVILLLLFIEFL) are cleaved as a propeptide — removed in mature form.

As to quaternary structure, forms a complex composed of RH5, P113 and human BSG/basigin; the complex bridges the merozoite and host erythrocyte membranes. Within the complex, interacts with RH5 (via N-terminus); the interaction tethers RH5 to the merozoite membrane.

The protein resides in the cell membrane. Membrane receptor which tethers secreted RH5 to the merozoite membrane during merozoite invasion of host erythocytes. The chain is Surface protein P113 from Plasmodium falciparum (isolate 3D7).